The chain runs to 557 residues: Urocanate hydratase (557 aa).

Residues 53–54, Q131, 177–179, D197, R202, 243–244, 264–268, 274–275, and Y323 each bind NAD(+); these read GG, GMG, NA, QTSAH, and YL. C411 is a catalytic residue. NAD(+) is bound at residue G493.

Belongs to the urocanase family. NAD(+) is required as a cofactor.

The protein resides in the cytoplasm. It catalyses the reaction 4-imidazolone-5-propanoate = trans-urocanate + H2O. Its pathway is amino-acid degradation; L-histidine degradation into L-glutamate; N-formimidoyl-L-glutamate from L-histidine: step 2/3. Its function is as follows. Catalyzes the conversion of urocanate to 4-imidazolone-5-propionate. The sequence is that of Urocanate hydratase from Hahella chejuensis (strain KCTC 2396).